The primary structure comprises 565 residues: Urocanate hydratase (565 aa).

Residues 61–62 (GG), Gln139, 185–187 (GMG), Glu205, Arg210, 251–252 (NA), 272–276 (QTSAH), 282–283 (YL), and Tyr331 contribute to the NAD(+) site. Residue Cys419 is part of the active site. Residues 453 to 472 (LDSGSVASPNRETESMRDGS) are disordered. Residues 463–472 (RETESMRDGS) show a composition bias toward basic and acidic residues. An NAD(+)-binding site is contributed by Gly501.

It belongs to the urocanase family. Requires NAD(+) as cofactor.

It is found in the cytoplasm. The enzyme catalyses 4-imidazolone-5-propanoate = trans-urocanate + H2O. Its pathway is amino-acid degradation; L-histidine degradation into L-glutamate; N-formimidoyl-L-glutamate from L-histidine: step 2/3. Functionally, catalyzes the conversion of urocanate to 4-imidazolone-5-propionate. The polypeptide is Urocanate hydratase (Pseudomonas syringae pv. tomato (strain ATCC BAA-871 / DC3000)).